The primary structure comprises 855 residues: Valine--tRNA ligase (855 aa).

The 'HIGH' region signature appears at 44–54; sequence PYPTGNFHIGN. A 'KMSKS' region motif is present at residues 522 to 526; sequence KMSKS. Lys-525 provides a ligand contact to ATP.

Belongs to the class-I aminoacyl-tRNA synthetase family. ValS type 2 subfamily.

The protein resides in the cytoplasm. It carries out the reaction tRNA(Val) + L-valine + ATP = L-valyl-tRNA(Val) + AMP + diphosphate. Functionally, catalyzes the attachment of valine to tRNA(Val). As ValRS can inadvertently accommodate and process structurally similar amino acids such as threonine, to avoid such errors, it has a 'posttransfer' editing activity that hydrolyzes mischarged Thr-tRNA(Val) in a tRNA-dependent manner. This is Valine--tRNA ligase from Methanothrix thermoacetophila (strain DSM 6194 / JCM 14653 / NBRC 101360 / PT) (Methanosaeta thermophila).